Here is a 282-residue protein sequence, read N- to C-terminus: Centromere protein P (282 aa).

A coiled-coil region spans residues 1 to 80 (MEQKYEEDIQ…KDLRRQTEIN (80 aa)).

The protein belongs to the CENP-P/CTF19 family.

Its subcellular location is the nucleus. The protein localises to the chromosome. It localises to the centromere. Probable component of a centromeric complex involved in assembly of kinetochore proteins, mitotic progression and chromosome segregation. The protein is Centromere protein P (cenpp) of Danio rerio (Zebrafish).